Consider the following 147-residue polypeptide: Hemoglobin subunit beta (147 aa).

Val-2 carries the N-acetylvaline modification. The Globin domain maps to His-3–His-147. Thr-13 is modified (phosphothreonine). Residue Ser-45 is modified to Phosphoserine. At Lys-60 the chain carries N6-acetyllysine. Residue His-64 participates in heme b binding. An N6-acetyllysine modification is found at Lys-83. His-93 contributes to the heme b binding site. S-nitrosocysteine is present on Cys-94. Lys-145 is subject to N6-acetyllysine.

The protein belongs to the globin family. Heterotetramer of two alpha chains and two beta chains. Red blood cells.

Its function is as follows. Involved in oxygen transport from the lung to the various peripheral tissues. This chain is Hemoglobin subunit beta (HBB), found in Scapanus orarius (Coast mole).